A 253-amino-acid polypeptide reads, in one-letter code: MICOS complex subunit mic25-b (253 aa).

Residue Gly-2 is the site of N-myristoyl glycine attachment. The segment at 38 to 82 (KDQSTWAASGAASGSATVPSKVGSSASHPAAASKDGAHKPTAAGV) is disordered. Residues 44–53 (AASGAASGSA) show a composition bias toward low complexity. A coiled-coil region spans residues 87–116 (AEEDLYRRYEREQTLIQEELARLAKREKDA). A CHCH domain is found at 206–248 (DPVCMDLQSNILKCYAENKQERLNCSDLAKEYQKCVSAAQKNL). 2 short sequence motifs (cx9C motif) span residues 209-219 (CMDLQSNILKC) and 230-240 (CSDLAKEYQKC). Cystine bridges form between Cys-209-Cys-240 and Cys-219-Cys-230.

This sequence belongs to the MICOS complex subunit Mic19 family. Metazoan Mic25 subfamily. As to quaternary structure, component of the mitochondrial contact site and cristae organizing system (MICOS) complex (also known as MINOS or MitOS complex).

The protein localises to the mitochondrion inner membrane. Functionally, component of the MICOS complex, a large protein complex of the mitochondrial inner membrane that plays crucial roles in the maintenance of crista junctions, inner membrane architecture, and formation of contact sites to the outer membrane. The polypeptide is MICOS complex subunit mic25-b (chchd6-b) (Xenopus laevis (African clawed frog)).